The sequence spans 111 residues: Large ribosomal subunit protein uL23 (111 aa).

Belongs to the universal ribosomal protein uL23 family. In terms of assembly, part of the 50S ribosomal subunit. Contacts protein L29, and trigger factor when it is bound to the ribosome.

Functionally, one of the early assembly proteins it binds 23S rRNA. One of the proteins that surrounds the polypeptide exit tunnel on the outside of the ribosome. Forms the main docking site for trigger factor binding to the ribosome. The sequence is that of Large ribosomal subunit protein uL23 from Chlamydia caviae (strain ATCC VR-813 / DSM 19441 / 03DC25 / GPIC) (Chlamydophila caviae).